The following is a 144-amino-acid chain: Large ribosomal subunit protein uL15 (144 aa).

Residues 1-60 form a disordered region; the sequence is MRLNSLRPAAGSRPDANRVGRGAGTGNGKTAGRGHKGQHSRSGGFTKVGFEGGQMPLQRR. Gly residues predominate over residues 21-31; it reads RGAGTGNGKTA.

This sequence belongs to the universal ribosomal protein uL15 family. Part of the 50S ribosomal subunit.

Its function is as follows. Binds to the 23S rRNA. The chain is Large ribosomal subunit protein uL15 from Alkalilimnicola ehrlichii (strain ATCC BAA-1101 / DSM 17681 / MLHE-1).